We begin with the raw amino-acid sequence, 424 residues long: Catabolic NAD-specific glutamate dehydrogenase RocG (424 aa).

Substrate is bound by residues Lys-80 and Lys-104. The active-site Proton donor is the Lys-116. NAD(+)-binding residues include Thr-200 and Asn-231. Ser-358 is a binding site for substrate.

This sequence belongs to the Glu/Leu/Phe/Val dehydrogenases family. As to quaternary structure, homohexamer. Interacts with transcriptional regulator GltC.

It carries out the reaction L-glutamate + NAD(+) + H2O = 2-oxoglutarate + NH4(+) + NADH + H(+). In terms of biological role, devoted to catabolic function of glutamate (and other amino acids of the glutamate family) utilization as sole nitrogen source. It is not involved in anabolic function of glutamate biosynthesis since B.subtilis possesses only one route of glutamate biosynthesis from ammonia, catalyzed by glutamate synthase. Wild-type cells are unable to utilize glutamate or glutamine as a sole carbon source; thus RocG does not function physiologically to synthesize glutamate, but it is involved in the utilization of arginine, and proline as carbon or nitrogen source. The catabolic RocG is essential for controlling gltAB expression via an inhibitory interactions with the transcriptional regulator GltC in response to the availability of sugars. The protein is Catabolic NAD-specific glutamate dehydrogenase RocG of Bacillus subtilis (strain 168).